We begin with the raw amino-acid sequence, 295 residues long: Protoheme IX farnesyltransferase (295 aa).

9 consecutive transmembrane segments (helical) span residues 8 to 28, 35 to 55, 74 to 94, 106 to 125, 132 to 152, 162 to 182, 208 to 228, 233 to 253, and 264 to 284; these read VTKP…FLLA, YPLF…GCVF, VLVK…LLGI, PLAM…VYSL, VYGT…GYCA, LILL…IAIF, ITLY…GGYA, LVVA…GYKA, and FVFS…DFMV.

The protein belongs to the UbiA prenyltransferase family. Protoheme IX farnesyltransferase subfamily.

The protein localises to the cell inner membrane. The catalysed reaction is heme b + (2E,6E)-farnesyl diphosphate + H2O = Fe(II)-heme o + diphosphate. Its pathway is porphyrin-containing compound metabolism; heme O biosynthesis; heme O from protoheme: step 1/1. In terms of biological role, converts heme B (protoheme IX) to heme O by substitution of the vinyl group on carbon 2 of heme B porphyrin ring with a hydroxyethyl farnesyl side group. The protein is Protoheme IX farnesyltransferase of Cronobacter sakazakii (strain ATCC BAA-894) (Enterobacter sakazakii).